The sequence spans 316 residues: 4-hydroxy-3-methylbut-2-enyl diphosphate reductase (316 aa).

Position 12 (Cys-12) interacts with [4Fe-4S] cluster. (2E)-4-hydroxy-3-methylbut-2-enyl diphosphate-binding residues include His-41 and His-74. The dimethylallyl diphosphate site is built by His-41 and His-74. His-41 and His-74 together coordinate isopentenyl diphosphate. Cys-96 contributes to the [4Fe-4S] cluster binding site. His-124 contacts (2E)-4-hydroxy-3-methylbut-2-enyl diphosphate. Residue His-124 participates in dimethylallyl diphosphate binding. Residue His-124 coordinates isopentenyl diphosphate. The Proton donor role is filled by Glu-126. Thr-169 serves as a coordination point for (2E)-4-hydroxy-3-methylbut-2-enyl diphosphate. Cys-199 serves as a coordination point for [4Fe-4S] cluster. The (2E)-4-hydroxy-3-methylbut-2-enyl diphosphate site is built by Ser-227, Ser-228, Asn-229, and Ser-271. Dimethylallyl diphosphate contacts are provided by Ser-227, Ser-228, Asn-229, and Ser-271. Residues Ser-227, Ser-228, Asn-229, and Ser-271 each contribute to the isopentenyl diphosphate site.

Belongs to the IspH family. [4Fe-4S] cluster is required as a cofactor.

The catalysed reaction is isopentenyl diphosphate + 2 oxidized [2Fe-2S]-[ferredoxin] + H2O = (2E)-4-hydroxy-3-methylbut-2-enyl diphosphate + 2 reduced [2Fe-2S]-[ferredoxin] + 2 H(+). The enzyme catalyses dimethylallyl diphosphate + 2 oxidized [2Fe-2S]-[ferredoxin] + H2O = (2E)-4-hydroxy-3-methylbut-2-enyl diphosphate + 2 reduced [2Fe-2S]-[ferredoxin] + 2 H(+). The protein operates within isoprenoid biosynthesis; dimethylallyl diphosphate biosynthesis; dimethylallyl diphosphate from (2E)-4-hydroxy-3-methylbutenyl diphosphate: step 1/1. Its pathway is isoprenoid biosynthesis; isopentenyl diphosphate biosynthesis via DXP pathway; isopentenyl diphosphate from 1-deoxy-D-xylulose 5-phosphate: step 6/6. Catalyzes the conversion of 1-hydroxy-2-methyl-2-(E)-butenyl 4-diphosphate (HMBPP) into a mixture of isopentenyl diphosphate (IPP) and dimethylallyl diphosphate (DMAPP). Acts in the terminal step of the DOXP/MEP pathway for isoprenoid precursor biosynthesis. In Xanthomonas campestris pv. campestris (strain ATCC 33913 / DSM 3586 / NCPPB 528 / LMG 568 / P 25), this protein is 4-hydroxy-3-methylbut-2-enyl diphosphate reductase.